The following is a 225-amino-acid chain: Phosphatidylserine decarboxylase proenzyme (225 aa).

The active-site Schiff-base intermediate with substrate; via pyruvic acid is serine 182. Serine 182 is modified (pyruvic acid (Ser); by autocatalysis).

This sequence belongs to the phosphatidylserine decarboxylase family. PSD-A subfamily. In terms of assembly, heterodimer of a large membrane-associated beta subunit and a small pyruvoyl-containing alpha subunit. The cofactor is pyruvate. Is synthesized initially as an inactive proenzyme. Formation of the active enzyme involves a self-maturation process in which the active site pyruvoyl group is generated from an internal serine residue via an autocatalytic post-translational modification. Two non-identical subunits are generated from the proenzyme in this reaction, and the pyruvate is formed at the N-terminus of the alpha chain, which is derived from the carboxyl end of the proenzyme. The post-translation cleavage follows an unusual pathway, termed non-hydrolytic serinolysis, in which the side chain hydroxyl group of the serine supplies its oxygen atom to form the C-terminus of the beta chain, while the remainder of the serine residue undergoes an oxidative deamination to produce ammonia and the pyruvoyl prosthetic group on the alpha chain.

The protein localises to the cell membrane. The enzyme catalyses a 1,2-diacyl-sn-glycero-3-phospho-L-serine + H(+) = a 1,2-diacyl-sn-glycero-3-phosphoethanolamine + CO2. Its pathway is phospholipid metabolism; phosphatidylethanolamine biosynthesis; phosphatidylethanolamine from CDP-diacylglycerol: step 2/2. Functionally, catalyzes the formation of phosphatidylethanolamine (PtdEtn) from phosphatidylserine (PtdSer). This Neorickettsia sennetsu (strain ATCC VR-367 / Miyayama) (Ehrlichia sennetsu) protein is Phosphatidylserine decarboxylase proenzyme.